The following is a 363-amino-acid chain: Carbamoyl phosphate synthase small chain (363 aa).

Residues 1–172 (MKAFLVLDNG…TKYIFGTHTG (172 aa)) are CPSase. L-glutamine contacts are provided by Ser45, Gly224, and Gly226. The Glutamine amidotransferase type-1 domain occupies 176–362 (KLAVYDYGVK…YDLVETTKRG (187 aa)). Catalysis depends on Cys252, which acts as the Nucleophile. L-glutamine is bound by residues Leu253, Gln256, Asn294, Gly296, and Phe297. Active-site residues include His335 and Glu337.

This sequence belongs to the CarA family. Composed of two chains; the small (or glutamine) chain promotes the hydrolysis of glutamine to ammonia, which is used by the large (or ammonia) chain to synthesize carbamoyl phosphate. Tetramer of heterodimers (alpha,beta)4.

The enzyme catalyses hydrogencarbonate + L-glutamine + 2 ATP + H2O = carbamoyl phosphate + L-glutamate + 2 ADP + phosphate + 2 H(+). It carries out the reaction L-glutamine + H2O = L-glutamate + NH4(+). It participates in amino-acid biosynthesis; L-arginine biosynthesis; carbamoyl phosphate from bicarbonate: step 1/1. The protein operates within pyrimidine metabolism; UMP biosynthesis via de novo pathway; (S)-dihydroorotate from bicarbonate: step 1/3. Small subunit of the glutamine-dependent carbamoyl phosphate synthetase (CPSase). CPSase catalyzes the formation of carbamoyl phosphate from the ammonia moiety of glutamine, carbonate, and phosphate donated by ATP, constituting the first step of 2 biosynthetic pathways, one leading to arginine and/or urea and the other to pyrimidine nucleotides. The small subunit (glutamine amidotransferase) binds and cleaves glutamine to supply the large subunit with the substrate ammonia. The protein is Carbamoyl phosphate synthase small chain of Leptospira borgpetersenii serovar Hardjo-bovis (strain L550).